A 382-amino-acid chain; its full sequence is Queuine tRNA-ribosyltransferase (382 aa).

Asp93 (proton acceptor) is an active-site residue. Substrate is bound by residues 93-97 (DSGGF), Asp147, Gln191, and Gly218. An RNA binding region spans residues 249–255 (GVGKPED). Asp268 acts as the Nucleophile in catalysis. Positions 273–277 (TRNAR) are RNA binding; important for wobble base 34 recognition. Zn(2+) contacts are provided by Cys306, Cys308, Cys311, and His337.

Belongs to the queuine tRNA-ribosyltransferase family. Homodimer. Within each dimer, one monomer is responsible for RNA recognition and catalysis, while the other monomer binds to the replacement base PreQ1. Requires Zn(2+) as cofactor.

The enzyme catalyses 7-aminomethyl-7-carbaguanine + guanosine(34) in tRNA = 7-aminomethyl-7-carbaguanosine(34) in tRNA + guanine. It functions in the pathway tRNA modification; tRNA-queuosine biosynthesis. Functionally, catalyzes the base-exchange of a guanine (G) residue with the queuine precursor 7-aminomethyl-7-deazaguanine (PreQ1) at position 34 (anticodon wobble position) in tRNAs with GU(N) anticodons (tRNA-Asp, -Asn, -His and -Tyr). Catalysis occurs through a double-displacement mechanism. The nucleophile active site attacks the C1' of nucleotide 34 to detach the guanine base from the RNA, forming a covalent enzyme-RNA intermediate. The proton acceptor active site deprotonates the incoming PreQ1, allowing a nucleophilic attack on the C1' of the ribose to form the product. After dissociation, two additional enzymatic reactions on the tRNA convert PreQ1 to queuine (Q), resulting in the hypermodified nucleoside queuosine (7-(((4,5-cis-dihydroxy-2-cyclopenten-1-yl)amino)methyl)-7-deazaguanosine). The sequence is that of Queuine tRNA-ribosyltransferase from Actinobacillus pleuropneumoniae serotype 5b (strain L20).